The following is a 76-amino-acid chain: MPKRILQGTVTSDANAQTVTVLVERRFTHPVLKKTIRKSKKYRAHDEKNAFKVGDTVRIIECAPKSKTKRWEVLEA.

It belongs to the universal ribosomal protein uS17 family. As to quaternary structure, part of the 30S ribosomal subunit.

Its function is as follows. One of the primary rRNA binding proteins, it binds specifically to the 5'-end of 16S ribosomal RNA. In Ruegeria pomeroyi (strain ATCC 700808 / DSM 15171 / DSS-3) (Silicibacter pomeroyi), this protein is Small ribosomal subunit protein uS17.